The sequence spans 719 residues: Polyribonucleotide nucleotidyltransferase (719 aa).

Mg(2+) contacts are provided by D495 and D501. The 60-residue stretch at 562–621 (PRRLSFRIDPELIGTVIGPGGRTIKGITERTNTKIDIEDTGIVTVASHDGAAAEEAQKII) folds into the KH domain. In terms of domain architecture, S1 motif spans 631–699 (GEYFDGKVTR…NRGRINLTLR (69 aa)). The segment at 699-719 (RGVPQDGSDPQPTVILPIGES) is disordered.

This sequence belongs to the polyribonucleotide nucleotidyltransferase family. Mg(2+) is required as a cofactor.

The protein localises to the cytoplasm. The enzyme catalyses RNA(n+1) + phosphate = RNA(n) + a ribonucleoside 5'-diphosphate. Functionally, involved in mRNA degradation. Catalyzes the phosphorolysis of single-stranded polyribonucleotides processively in the 3'- to 5'-direction. This is Polyribonucleotide nucleotidyltransferase from Synechococcus sp. (strain RCC307).